The following is a 319-amino-acid chain: 12-(S)-hydroxy-5,8,10,14-eicosatetraenoic acid receptor (319 aa).

The Extracellular portion of the chain corresponds to 1-16 (MERTNCSAASTVVETA). N-linked (GlcNAc...) asparagine glycosylation occurs at asparagine 5. A helical transmembrane segment spans residues 17 to 37 (VGTMLTLECVLGLMGNAVALW). Residues 38-52 (TFFYRLKVWKPYAVY) are Cytoplasmic-facing. The helical transmembrane segment at 53-73 (LFNLVVADLLLATSLPFFAAF) threads the bilayer. Residues 74–91 (YLKGKTWKLGHMPCQVLL) lie on the Extracellular side of the membrane. A helical transmembrane segment spans residues 92–110 (FLLAFSRGVGVAFLTTVAL). Residues 111–131 (DRYLRVVHPRLRVNLLSLRAA) are Cytoplasmic-facing. The helical transmembrane segment at 132–152 (WGISSLIWLLMVVLTPQNLLT) threads the bilayer. Over 153–180 (CRTTQNSTECPSFYPTGGAKAIATCQEV) the chain is Extracellular. The chain crosses the membrane as a helical span at residues 181–201 (LFFLQVLLPFGLISFCNSGLI). Residues 202–219 (RTLQKRLRESDKQPRIRR) are Cytoplasmic-facing. The chain crosses the membrane as a helical span at residues 220–240 (ARVLVAIVLLLFGLCFLPSVL). Residues 241–265 (TRVLVHIFQEFKSCSVQQAIVRASD) are Extracellular-facing. Residues 266-284 (IAGSLTCLHSTLSPAIYCF) form a helical membrane-spanning segment. Over 285 to 319 (SNPAFTHSYRKVLKSLRGRRKAAESPSDNLRDSYS) the chain is Cytoplasmic.

This sequence belongs to the G-protein coupled receptor 1 family. As to quaternary structure, interacts with KRAS; in a farnesylation-dependent manner.

The protein resides in the cell membrane. Functionally, high-affinity receptor for 12-(S)-hydroxy-5,8,10,14-eicosatetraenoic acid (12-S-HETE), with much lower affinities for other HETE isomers. 12-S-HETE is a eicosanoid, a 12-lipoxygenase (ALOX12) metabolite of arachidonic acid, involved in many physiologic and pathologic processes, such as cell growth, adhesion, inflammation and cancer promotion. 12-S-HETE-binding leads to activation of ERK1/2 (MAPK3/MAPK1), MEK, and NF-kappa-B pathways and leads to cell growth. Plays a crucial role for proliferation, survival and macropinocytosis of KRAS-dependent cancer cells by mediating the translocation of KRAS from the endoplasmic reticulum to the plasma membrane (PM) and its association with the PM. Contributes to enhanced immune responses by inducing dendrite protrusion of small intestinal CX3CR1(+) phagocytes for the uptake of luminal antigens. Also acts as a key receptor for 12-(S)-HETE-mediated liver ischemia reperfusion injury. Proton-sensing G protein-coupled receptor. The protein is 12-(S)-hydroxy-5,8,10,14-eicosatetraenoic acid receptor (Gpr31) of Mus musculus (Mouse).